A 735-amino-acid chain; its full sequence is 1,4-alpha-glucan branching enzyme GlgB (735 aa).

The Nucleophile role is filled by aspartate 414. Residue glutamate 469 is the Proton donor of the active site.

This sequence belongs to the glycosyl hydrolase 13 family. GlgB subfamily. Monomer.

The enzyme catalyses Transfers a segment of a (1-&gt;4)-alpha-D-glucan chain to a primary hydroxy group in a similar glucan chain.. It participates in glycan biosynthesis; glycogen biosynthesis. Functionally, catalyzes the formation of the alpha-1,6-glucosidic linkages in glycogen by scission of a 1,4-alpha-linked oligosaccharide from growing alpha-1,4-glucan chains and the subsequent attachment of the oligosaccharide to the alpha-1,6 position. The sequence is that of 1,4-alpha-glucan branching enzyme GlgB from Burkholderia lata (strain ATCC 17760 / DSM 23089 / LMG 22485 / NCIMB 9086 / R18194 / 383).